The chain runs to 268 residues: 3-methyl-2-oxobutanoate hydroxymethyltransferase (268 aa).

The Mg(2+) site is built by Asp46 and Asp85. 3-methyl-2-oxobutanoate is bound by residues 46 to 47 (DS), Asp85, and Lys114. Residue Glu116 coordinates Mg(2+). The active-site Proton acceptor is the Glu183.

This sequence belongs to the PanB family. In terms of assembly, homodecamer; pentamer of dimers. The cofactor is Mg(2+).

Its subcellular location is the cytoplasm. It catalyses the reaction 3-methyl-2-oxobutanoate + (6R)-5,10-methylene-5,6,7,8-tetrahydrofolate + H2O = 2-dehydropantoate + (6S)-5,6,7,8-tetrahydrofolate. It participates in cofactor biosynthesis; coenzyme A biosynthesis. Its function is as follows. Catalyzes the reversible reaction in which hydroxymethyl group from 5,10-methylenetetrahydrofolate is transferred onto alpha-ketoisovalerate to form ketopantoate. In Sulfolobus acidocaldarius (strain ATCC 33909 / DSM 639 / JCM 8929 / NBRC 15157 / NCIMB 11770), this protein is 3-methyl-2-oxobutanoate hydroxymethyltransferase.